We begin with the raw amino-acid sequence, 98 residues long: NADH-ubiquinone oxidoreductase chain 4L (98 aa).

3 helical membrane passes run 1 to 21 (MSITYMNMFMAFTISLLGLLL), 29 to 49 (SLLCLEGMMLSLFVMMTMIIL), and 61 to 81 (IILLVFAACEAALGLSLLVMV).

Belongs to the complex I subunit 4L family. Core subunit of respiratory chain NADH dehydrogenase (Complex I) which is composed of 45 different subunits.

It is found in the mitochondrion inner membrane. The enzyme catalyses a ubiquinone + NADH + 5 H(+)(in) = a ubiquinol + NAD(+) + 4 H(+)(out). Its function is as follows. Core subunit of the mitochondrial membrane respiratory chain NADH dehydrogenase (Complex I) which catalyzes electron transfer from NADH through the respiratory chain, using ubiquinone as an electron acceptor. Part of the enzyme membrane arm which is embedded in the lipid bilayer and involved in proton translocation. The sequence is that of NADH-ubiquinone oxidoreductase chain 4L (MT-ND4L) from Platyrrhinus dorsalis (Thomas's broad-nosed bat).